The chain runs to 306 residues: Erythromycin 3''-O-methyltransferase (306 aa).

2 residues coordinate S-adenosyl-L-methionine: leucine 157 and histidine 162.

This sequence belongs to the methyltransferase superfamily.

The enzyme catalyses erythromycin C + S-adenosyl-L-methionine = erythromycin A + S-adenosyl-L-homocysteine + H(+). It carries out the reaction erythromycin D + S-adenosyl-L-methionine = erythromycin B + S-adenosyl-L-homocysteine + H(+). Its pathway is antibiotic biosynthesis; erythromycin biosynthesis. Its function is as follows. S-adenosyl-L-methionine-dependent O-methyltransferase that catalyzes the last step in the erythromycin biosynthesis pathway. Methylates the position 3 of the mycarosyl moiety of erythromycin C, forming the most active form of the antibiotic, erythromycin A. Can also methylate the precursor erythromycin D, forming erythromycin B. This chain is Erythromycin 3''-O-methyltransferase (eryG), found in Saccharopolyspora erythraea (strain ATCC 11635 / DSM 40517 / JCM 4748 / NBRC 13426 / NCIMB 8594 / NRRL 2338).